We begin with the raw amino-acid sequence, 142 residues long: Hemoglobin subunit alpha-1 (142 aa).

Position 1 is an N-acetylserine (S1). In terms of domain architecture, Globin spans 1–142 (SLSDKDKAAV…VALALAQRYR (142 aa)). H59 lines the O2 pocket. Residue H88 coordinates heme b.

The protein belongs to the globin family. As to quaternary structure, hb1 is a heterotetramer of two alpha-2 chains and two beta chains. As to expression, red blood cells.

In terms of biological role, involved in oxygen transport from gills to the various peripheral tissues. This chain is Hemoglobin subunit alpha-1 (hba1), found in Notothenia neglecta (Yellowbelly rockcod).